Reading from the N-terminus, the 452-residue chain is Methionine aminopeptidase 2 (452 aa).

Residues 1 to 91 (MTGVTGTEDT…KNKKKKKKKI (91 aa)) are disordered. The span at 8 to 38 (EDTKVIESKINELNIDKSKPEKTNKVNKSDD) shows a compositional bias: basic and acidic residues. The span at 39 to 62 (VDNDDVDNDDNDDEDNDDDDDEIT) shows a compositional bias: acidic residues. The span at 74 to 91 (KKKKKNKNKNKKKKKKKI) shows a compositional bias: basic residues. His-203 is a binding site for substrate. A divalent metal cation contacts are provided by Asp-223, Asp-234, and His-305. Substrate is bound at residue His-313. A divalent metal cation-binding residues include Glu-338 and Glu-433.

Belongs to the peptidase M24A family. Methionine aminopeptidase eukaryotic type 2 subfamily. Co(2+) serves as cofactor. Zn(2+) is required as a cofactor. The cofactor is Mn(2+). Requires Fe(2+) as cofactor.

Its subcellular location is the cytoplasm. The catalysed reaction is Release of N-terminal amino acids, preferentially methionine, from peptides and arylamides.. Its function is as follows. Cotranslationally removes the N-terminal methionine from nascent proteins. The N-terminal methionine is often cleaved when the second residue in the primary sequence is small and uncharged (Met-Ala-, Cys, Gly, Pro, Ser, Thr, or Val). The protein is Methionine aminopeptidase 2 of Candida dubliniensis (strain CD36 / ATCC MYA-646 / CBS 7987 / NCPF 3949 / NRRL Y-17841) (Yeast).